Here is a 210-residue protein sequence, read N- to C-terminus: tRNA (guanine-N(7)-)-methyltransferase (210 aa).

S-adenosyl-L-methionine-binding residues include Glu36, Glu61, Asp90, and Asp112. The active site involves Asp112. Substrate contacts are provided by residues Lys116, Asp148, and 188 to 191 (TEYE).

Belongs to the class I-like SAM-binding methyltransferase superfamily. TrmB family.

The enzyme catalyses guanosine(46) in tRNA + S-adenosyl-L-methionine = N(7)-methylguanosine(46) in tRNA + S-adenosyl-L-homocysteine. The protein operates within tRNA modification; N(7)-methylguanine-tRNA biosynthesis. In terms of biological role, catalyzes the formation of N(7)-methylguanine at position 46 (m7G46) in tRNA. In Mycoplasma pneumoniae (strain ATCC 29342 / M129 / Subtype 1) (Mycoplasmoides pneumoniae), this protein is tRNA (guanine-N(7)-)-methyltransferase.